Consider the following 231-residue polypeptide: 7-cyano-7-deazaguanine synthase (231 aa).

Residue 8–18 (FSGGQDSTTCL) participates in ATP binding. 4 residues coordinate Zn(2+): Cys188, Cys197, Cys200, and Cys203.

This sequence belongs to the QueC family. It depends on Zn(2+) as a cofactor.

The catalysed reaction is 7-carboxy-7-deazaguanine + NH4(+) + ATP = 7-cyano-7-deazaguanine + ADP + phosphate + H2O + H(+). It functions in the pathway purine metabolism; 7-cyano-7-deazaguanine biosynthesis. Functionally, catalyzes the ATP-dependent conversion of 7-carboxy-7-deazaguanine (CDG) to 7-cyano-7-deazaguanine (preQ(0)). The sequence is that of 7-cyano-7-deazaguanine synthase from Salmonella paratyphi B (strain ATCC BAA-1250 / SPB7).